The primary structure comprises 224 residues: UPF0758 protein VF_0126 (224 aa).

One can recognise an MPN domain in the interval 102–224 (ALTSPEHTKR…IVSFAERGWI (123 aa)). Zn(2+)-binding residues include H173, H175, and D186. The short motif at 173 to 186 (HNHPSGVAEPSQAD) is the JAMM motif element.

It belongs to the UPF0758 family.

The polypeptide is UPF0758 protein VF_0126 (Aliivibrio fischeri (strain ATCC 700601 / ES114) (Vibrio fischeri)).